Consider the following 158-residue polypeptide: Transcriptional repressor NrdR (158 aa).

A zinc finger lies at 3–34 (CPSCQNTDSRVLESRAAEGGRSVRRRRECLNC). Positions 49-139 (ITVIKRNGHR…VYRHFRSVSD (91 aa)) constitute an ATP-cone domain.

Belongs to the NrdR family. It depends on Zn(2+) as a cofactor.

Its function is as follows. Negatively regulates transcription of bacterial ribonucleotide reductase nrd genes and operons by binding to NrdR-boxes. This Synechococcus sp. (strain CC9311) protein is Transcriptional repressor NrdR.